Reading from the N-terminus, the 254-residue chain is Probable phosphatase Shew185_1467 (254 aa).

Zn(2+) is bound by residues His8, His10, His16, His41, Glu74, His102, His132, Asp193, and His195.

It belongs to the PHP family. The cofactor is Zn(2+).

The sequence is that of Probable phosphatase Shew185_1467 from Shewanella baltica (strain OS185).